Here is a 132-residue protein sequence, read N- to C-terminus: Small ribosomal subunit protein uS8c (132 aa).

It belongs to the universal ribosomal protein uS8 family. As to quaternary structure, part of the 30S ribosomal subunit.

The protein localises to the plastid. It localises to the chloroplast. One of the primary rRNA binding proteins, it binds directly to 16S rRNA central domain where it helps coordinate assembly of the platform of the 30S subunit. In Gracilaria tenuistipitata var. liui (Red alga), this protein is Small ribosomal subunit protein uS8c (rps8).